We begin with the raw amino-acid sequence, 320 residues long: Beta-ketoacyl-[acyl-carrier-protein] synthase III (320 aa).

Residues C114 and H247 contribute to the active site. The interval 248–252 (QANRR) is ACP-binding. N277 is a catalytic residue.

This sequence belongs to the thiolase-like superfamily. FabH family. As to quaternary structure, homodimer.

The protein resides in the cytoplasm. It catalyses the reaction malonyl-[ACP] + acetyl-CoA + H(+) = 3-oxobutanoyl-[ACP] + CO2 + CoA. It participates in lipid metabolism; fatty acid biosynthesis. Its function is as follows. Catalyzes the condensation reaction of fatty acid synthesis by the addition to an acyl acceptor of two carbons from malonyl-ACP. Catalyzes the first condensation reaction which initiates fatty acid synthesis and may therefore play a role in governing the total rate of fatty acid production. Possesses both acetoacetyl-ACP synthase and acetyl transacylase activities. Its substrate specificity determines the biosynthesis of branched-chain and/or straight-chain of fatty acids. This is Beta-ketoacyl-[acyl-carrier-protein] synthase III from Neisseria meningitidis serogroup A / serotype 4A (strain DSM 15465 / Z2491).